A 158-amino-acid chain; its full sequence is uncharacterized protein (158 aa).

The next 3 membrane-spanning stretches (helical) occupy residues glycine 45–isoleucine 65, leucine 76–tryptophan 96, and phenylalanine 106–leucine 126.

To U.parvum UU007, UU041 and UU042.

It is found in the cell membrane. This is an uncharacterized protein from Ureaplasma parvum serovar 3 (strain ATCC 700970).